The sequence spans 333 residues: MSAATKLHKTSWCALRQLQQYRTKANFSGSSASLAKRNDLFNQEQRRQRDAVGRIDKIEVRYLGLPEDVTLVMNGNISTPFNCAQHLSEGHCKRSALALIDGSVPWDMHRPLQESCTLQLLNFHVSEPHVVNKAFWRTCSFMLGAALNRAFKPEANLQLHSFPGPNIKSGSFVHDIVLQTQNWEPGKEEMRALSAEMVKLAAQDLRIERLDVQQDLAQEMFKDSKYKSEQLPSISQQTNGRVTLYRLGDHIDISRGPMVASTSFLGKCVISAAHKVAEEGPSGAFYRIQGVALPSGFQLNHVAFGVLEERSKKPSPARLPNEPFEEQQQLQLS.

One can recognise a TGS domain in the interval 56–122 (DKIEVRYLGL…QESCTLQLLN (67 aa)). Positions 311–333 (SKKPSPARLPNEPFEEQQQLQLS) are disordered.

This sequence belongs to the mitochondrion-specific ribosomal protein mL39 family. In terms of assembly, component of the mitochondrial ribosome large subunit (39S) which comprises a 16S rRNA and about 50 distinct proteins.

The protein localises to the mitochondrion. The sequence is that of Large ribosomal subunit protein mL39 (mRpL39) from Drosophila melanogaster (Fruit fly).